Reading from the N-terminus, the 444-residue chain is Probable D-serine dehydratase (444 aa).

The residue at position 118 (Lys118) is an N6-(pyridoxal phosphate)lysine.

It belongs to the serine/threonine dehydratase family. DsdA subfamily. Pyridoxal 5'-phosphate is required as a cofactor.

The enzyme catalyses D-serine = pyruvate + NH4(+). This chain is Probable D-serine dehydratase, found in Desulfitobacterium hafniense (strain Y51).